The primary structure comprises 495 residues: MRINPTTSGSAVSTLEEKNLGRIAQIIGPVLDVVFPPGKMPNIYNALVVKGRDTVGQQINVICEVQQLLGNNRVRAVAMSATDGLTRGMEVLDTGAALSVPVGGATLGRIFNVLGEPVDNLGPVDTRTTSPIHRSAPAFIQLDTKLSIFETGIKVVDLLAPYRRGGKIGLFGGAGVGKTVLIMELINNIAKAHGGVSVFGGVGERTREGNDLYMEMKESGVINEKNIAESKVALVYGQMNEPPGARMRVGLTALTMAEYFRDVNEQDVLLFIDNIFRFVQAGSEVSALLGRMPSAVGYQPTLSTEMGSLQERITSTKEGSITSIQAVYVPADDLTDPAPATTFAHLDATTVLSRGLAAKGIYPAVDPLDSTSTMLQPRIVGEEHYETAQRVKQTLQRYKELQDIIAILGLDELSEEDRLTVARARKIERFLSQPFFVAEVFTGSPGKYVGLAETIRGFQLILSGELDGLPEQAFYLVGNIDEATAKAMNLEGEKK.

172–179 (GGAGVGKT) lines the ATP pocket.

It belongs to the ATPase alpha/beta chains family. In terms of assembly, F-type ATPases have 2 components, CF(1) - the catalytic core - and CF(0) - the membrane proton channel. CF(1) has five subunits: alpha(3), beta(3), gamma(1), delta(1), epsilon(1). CF(0) has four main subunits: a(1), b(1), b'(1) and c(9-12).

Its subcellular location is the plastid. The protein resides in the chloroplast thylakoid membrane. It catalyses the reaction ATP + H2O + 4 H(+)(in) = ADP + phosphate + 5 H(+)(out). In terms of biological role, produces ATP from ADP in the presence of a proton gradient across the membrane. The catalytic sites are hosted primarily by the beta subunits. This Barnardia japonica (Chinese squill) protein is ATP synthase subunit beta, chloroplastic.